The chain runs to 2102 residues: MSSCFVPNGASLEDCHSNLFCLADLTGIKWKCFVWQGPTSSPILFPVTEEDPILCSFSRCLKADVLSVWRRHQTPGRRELWIFWWGDDPNFAELVHHDLSCNEDGSWESGLTYECRTLLFKAIHNLLERCLMNRSFVRIGKWFVKPYEKDEKPINKSEHLSCSFTFFVHGDSNVCTSVEINQHQPVYLLSEEHLTLAQQSSSSVQVILSPYGLSGTLTGQSFKLSDPPTQKLIEEWKQFYPIGPNTKEVTDDKMDDLDWEDDSLAAVEVVVAGVRMVYPASLVLVAQSDIPLVATVSSSSSSGSYAGAPHNQLVHGDTGISSVTLTPPTSPEEAQAVSQPAQKWVKLSAMSGVFSVDSSSHHGGKIPRRLASQMVERVWQECNINRAQNKRKFSTMSNGVCEEETDKASVWDFVESSQRSQCSCSRLKNQKQRACSTPGHPPSAGQPPQPSTKHKMAEKLEKGDKQQKRPLTPFHHRSSLCEEQPSLEQGESVHRLCLQGHEDSRYPSLHHADVTSSKTPMLHSSADEMAGSPQPPPLSPHPCERMEEPADGMKSSSSPLHQHFYPPSSEPCLEPQKPPDESTLDPLPLPCPPPYPETLEATIYVGSAINPNEDTTHNPWKYFRVPGGRNSDFHTPHLPVVAHFEDGNRTGGQDGIVSITEMMSSSKRPLKVSEELVKMYEHKKNQYLSSAVCDEDPEQESDPYAFEEGDEEFNFSDKDKKSGPEREAGKKAKREDGSSSSDDAQGSGGSKPLPTTSLIHETDLVVSINDLDNLFNSDEDDLTQPGSRRAAGGAEEKFGGKEPKPAAPDPLPCCADLHQMFPTPPSLDQGYSPINMGNTESAAGLSLLDGAMSGNFKMEVEEGFCSPKPSEIKDFSYVFKPESCQALIGCSLYAPLKTLPSQCLLPVKLPEECVYRPSWTVGKLGMLQPMAAMTFLNKDSNIPSVGSVVEQEQSCTPQTHNTFMSNSAPPSNSGAGILPSPATPRISAPTPRTPRTPRTPRGPASVQGSLKYENSDLNSPASTPSTCRPLSSVEPATVPSIPEAHSLYVTLILSESVMNLFKDCNFDSCCICVCNMNITGADVGIYISDPNMDSQYSSMDPCSCGFSAVMNRRYGNGAGLFLEDELDIMGRGSDAAREIEKHFEAVRAASLKRGTVLEEQVPDDLMLLLQDLCTNPFSPIIRPDLLGTVIKSPIRLEERDYYSDCYMALEHGRQFMDNMSGGKVDETLVKSSSLHHWAKRNAFDMSMLFSQDVLRMLLSLQPVLQDTIQKKRSVRSWGVQGPLTWQQFHKMAGRGSYGTDESPEPLPIPTLLVGYEYDYVVLSPFALPYWEKLLLDPYSSQRDVGYMVVCPDNEALLNGAKTFFRDLTAVYESCRLGQHRPIAKSHADGIVTVSDAGSKALTDQTLIDWLPKTINSSSSSEALNKLKLYAHVCRHDLASCLASQSLDGSLLTQRNPASSSQTSSSSSPVTTAQNVTPTTNSNSNTNTNTTPTSTSTSSSSSSCPQGVGNMPSSKPNTIPPFGAQGLQSSQQSGGQSAGTLGDATSATSQPQVPSEPAESTMEREKVGVPTDGDSHAVTYPPAIVIYIVNPFSYEENCQGSSSSVWTIALLRCYLEMLQLLPPHIRNAVYVQIIPSQYLLQPVWSEERHIYAQHLKSLAFSVYTQCRRRLPTSTNVKTLTGFGPGLAIDTALQSKERPQCLHLYAPPFVLAPVKDKQTELGETFGEAAQKYNVLFVAYCLSHDQRWLLASCTDQYGELLETCVISIDVPNRARRKKGSARRQGLQKLWEWCLDLVQMTSLPWRIVIGRLGRIGHGELRDWSILLSRRNLQSLGRRLKEMCRMCGISAADSPSILSTCLVAMEPQASFVIMPDSVSTGSVFGRSTTLNMQTSQLNTPQDTSCTHILVFPTSAGLQAFSDVTDGMGGMDGILDLFAENDLVDPDLINIIPNSPTTSPVHSPGSHYHHGGDGSKGQGTDRMESHDESPNILQQPMALGYFVSTAKAGPLPDWFWSSCPQAKNQCPLFLKASLHLNVSSVQSDELLHSKHSHPLDSSHTSDVLRFVLEQYNALSWLTCDPATQDRRSCLPVHFVVLNQMYNFIMNML.

Disordered stretches follow at residues 304–335, 432–487, 514–587, 689–758, 776–819, and 947–1034; these read SYAG…EEAQ, QRAC…QPSL, VTSS…LDPL, SSAV…TTSL, NSDE…DLHQ, and SVVE…SSVE. Pro residues predominate over residues 439–450; it reads GHPPSAGQPPQP. The segment covering 455-467 has biased composition (basic and acidic residues); that stretch reads KMAEKLEKGDKQQ. The segment covering 693–714 has biased composition (acidic residues); the sequence is CDEDPEQESDPYAFEEGDEEFN. Composition is skewed to basic and acidic residues over residues 715–737 and 794–804; these read FSDK…REDG and AEEKFGGKEPK. The span at 947 to 974 shows a compositional bias: polar residues; sequence SVVEQEQSCTPQTHNTFMSNSAPPSNSG. The segment covering 979 to 990 has biased composition (low complexity); that stretch reads PSPATPRISAPT. Polar residues predominate over residues 1015–1029; that stretch reads SDLNSPASTPSTCRP. Short sequence motifs (LXXLL motif) lie at residues 1165–1169 and 1254–1258; these read LMLLL and LRMLL. Disordered stretches follow at residues 1451-1574 and 1948-1983; these read LTQR…DGDS and NSPT…HDES. Composition is skewed to low complexity over residues 1458–1467, 1476–1502, and 1522–1538; these read SSSQTSSSSS, TPTT…SSSS, and GAQG…QSAG. A compositionally biased stretch (polar residues) spans 1542-1552; the sequence is DATSATSQPQV. A compositionally biased stretch (basic and acidic residues) spans 1973–1983; that stretch reads GTDRMESHDES.

The protein belongs to the Mediator complex subunit 13 family. As to quaternary structure, component of the Mediator complex.

Its subcellular location is the nucleus. Functionally, component of the Mediator complex, a coactivator involved in regulated gene transcription of nearly all RNA polymerase II-dependent genes. Mediator functions as a bridge to convey information from gene-specific regulatory proteins to the basal RNA polymerase II transcription machinery. Mediator is recruited to promoters by direct interactions with regulatory proteins and serves as a scaffold for the assembly of a functional preinitiation complex with RNA polymerase II and the general transcription factors. The protein is Mediator of RNA polymerase II transcription subunit 13-like of Danio rerio (Zebrafish).